A 274-amino-acid polypeptide reads, in one-letter code: Large ribosomal subunit protein uL2 (274 aa).

Disordered regions lie at residues 21 to 59 (KVGL…GGHK) and 223 to 274 (VAMN…QLKG). Residues 32 to 42 (SLTSGKKSSGG) show a composition bias toward low complexity. Over residues 45–59 (NHGRITTRHRGGGHK) the composition is skewed to basic residues. Residues 263-274 (KSSDKYIKQLKG) show a composition bias toward basic and acidic residues.

It belongs to the universal ribosomal protein uL2 family. In terms of assembly, part of the 50S ribosomal subunit. Forms a bridge to the 30S subunit in the 70S ribosome.

Functionally, one of the primary rRNA binding proteins. Required for association of the 30S and 50S subunits to form the 70S ribosome, for tRNA binding and peptide bond formation. It has been suggested to have peptidyltransferase activity; this is somewhat controversial. Makes several contacts with the 16S rRNA in the 70S ribosome. This is Large ribosomal subunit protein uL2 from Wolbachia sp. subsp. Drosophila simulans (strain wRi).